The sequence spans 473 residues: Ribosomal RNA small subunit methyltransferase F (473 aa).

Residues 124–130 (ASAPGSK), Glu-148, Asp-175, and Asp-193 each bind S-adenosyl-L-methionine. Cys-246 functions as the Nucleophile in the catalytic mechanism.

It belongs to the class I-like SAM-binding methyltransferase superfamily. RsmB/NOP family.

It is found in the cytoplasm. The enzyme catalyses cytidine(1407) in 16S rRNA + S-adenosyl-L-methionine = 5-methylcytidine(1407) in 16S rRNA + S-adenosyl-L-homocysteine + H(+). In terms of biological role, specifically methylates the cytosine at position 1407 (m5C1407) of 16S rRNA. The polypeptide is Ribosomal RNA small subunit methyltransferase F (Aliivibrio fischeri (strain MJ11) (Vibrio fischeri)).